Reading from the N-terminus, the 678-residue chain is NADPH--cytochrome P450 reductase (678 aa).

Residue glycine 2 is modified to N-acetylglycine. Residues 2-22 (GDSNVDTGTTTSEMVAEEVSL) are Lumenal-facing. A helical transmembrane segment spans residues 23–43 (FSATDMVLFSLIVGLLTYWFI). Residues 44 to 678 (FRKKKDEVPE…KGRYSLDVWS (635 aa)) lie on the Cytoplasmic side of the membrane. Serine 63 is modified (phosphoserine). The Flavodoxin-like domain maps to 80–224 (IIVFYGSQTG…DFITWREQFW (145 aa)). FMN is bound by residues 86–91 (SQTGTA), 138–141 (ATYG), 173–182 (LGNKTYEHFN), and aspartate 208. The FAD-binding FR-type domain maps to 279-521 (KNPFLAVVTT…FVRKSQFRLP (243 aa)). Arginine 298 lines the NADP(+) pocket. FAD-binding positions include arginine 424, 454–457 (RYYS), 472–474 (CAV), tyrosine 478, and 488–491 (GVAT). Residues threonine 535, 596–597 (SR), 602–606 (KVYVQ), and aspartate 639 each bind NADP(+). Tryptophan 677 is an FAD binding site.

This sequence belongs to the NADPH--cytochrome P450 reductase family. It in the N-terminal section; belongs to the flavodoxin family. The protein in the C-terminal section; belongs to the flavoprotein pyridine nucleotide cytochrome reductase family. It depends on FAD as a cofactor. FMN is required as a cofactor.

It is found in the endoplasmic reticulum membrane. It catalyses the reaction 2 oxidized [cytochrome P450] + NADPH = 2 reduced [cytochrome P450] + NADP(+) + H(+). This enzyme is required for electron transfer from NADP to cytochrome P450 in microsomes. It can also provide electron transfer to heme oxygenase and cytochrome B5. This Sus scrofa (Pig) protein is NADPH--cytochrome P450 reductase.